The following is a 432-amino-acid chain: UPF0761 membrane protein Cag_0935 (432 aa).

Transmembrane regions (helical) follow at residues 52 to 72, 108 to 128, 148 to 168, 190 to 210, 220 to 240, and 254 to 274; these read LLSI…FEVF, NIPL…LSTV, FTLY…SLAA, LLAL…YMLV, AFAG…WFLF, and ALSV…VVLV.

It belongs to the UPF0761 family.

The protein localises to the cell inner membrane. This is UPF0761 membrane protein Cag_0935 from Chlorobium chlorochromatii (strain CaD3).